A 450-amino-acid chain; its full sequence is Glucose-6-phosphate isomerase (450 aa).

The residue at position 39 (Thr39) is a Phosphothreonine. Glu291 acts as the Proton donor in catalysis. Catalysis depends on residues His312 and Lys426.

The protein belongs to the GPI family.

It localises to the cytoplasm. It catalyses the reaction alpha-D-glucose 6-phosphate = beta-D-fructose 6-phosphate. It participates in carbohydrate biosynthesis; gluconeogenesis. The protein operates within carbohydrate degradation; glycolysis; D-glyceraldehyde 3-phosphate and glycerone phosphate from D-glucose: step 2/4. In terms of biological role, catalyzes the reversible isomerization of glucose-6-phosphate to fructose-6-phosphate. This is Glucose-6-phosphate isomerase from Bacillus anthracis.